A 407-amino-acid chain; its full sequence is Na(+)-translocating NADH-quinone reductase subunit F (407 aa).

A helical membrane pass occupies residues 3-23 (IILGVVMFTLIVLALTVMILF). The 95-residue stretch at 32–126 (GDITVEINED…NLKIELPEEI (95 aa)) folds into the 2Fe-2S ferredoxin-type domain. Positions 69, 75, 78, and 110 each coordinate [2Fe-2S] cluster. The 141-residue stretch at 129-269 (VKKWTCEVIS…SGPFGEFFAK (141 aa)) folds into the FAD-binding FR-type domain.

It belongs to the NqrF family. In terms of assembly, composed of six subunits; NqrA, NqrB, NqrC, NqrD, NqrE and NqrF. [2Fe-2S] cluster is required as a cofactor. It depends on FAD as a cofactor.

It localises to the cell inner membrane. It catalyses the reaction a ubiquinone + n Na(+)(in) + NADH + H(+) = a ubiquinol + n Na(+)(out) + NAD(+). NQR complex catalyzes the reduction of ubiquinone-1 to ubiquinol by two successive reactions, coupled with the transport of Na(+) ions from the cytoplasm to the periplasm. The first step is catalyzed by NqrF, which accepts electrons from NADH and reduces ubiquinone-1 to ubisemiquinone by a one-electron transfer pathway. This is Na(+)-translocating NADH-quinone reductase subunit F from Yersinia pseudotuberculosis serotype I (strain IP32953).